The sequence spans 151 residues: Macrodomain Ter protein (151 aa).

It belongs to the MatP family. In terms of assembly, homodimer.

It localises to the cytoplasm. Its function is as follows. Required for spatial organization of the terminus region of the chromosome (Ter macrodomain) during the cell cycle. Prevents early segregation of duplicated Ter macrodomains during cell division. Binds specifically to matS, which is a 13 bp signature motif repeated within the Ter macrodomain. The protein is Macrodomain Ter protein of Photorhabdus laumondii subsp. laumondii (strain DSM 15139 / CIP 105565 / TT01) (Photorhabdus luminescens subsp. laumondii).